The chain runs to 202 residues: Transcription factor MUTE (202 aa).

A bHLH domain is found at 1–49; the sequence is MSHIAVERNRRRQMNEHLKSLRSLTPCFYIKRGDQASIIGGVIEFIKEL.

Homodimer. As to expression, leaf epidermis and flowers.

The protein localises to the nucleus. Transcription factor. Together with FMA and SPCH, regulates the stomata formation. Required for the differentiation of stomatal guard cells, by promoting successive asymmetric cell divisions and the formation of guard mother cells. Promotes the conversion of the leaf epidermis into stomata. This Arabidopsis thaliana (Mouse-ear cress) protein is Transcription factor MUTE (MUTE).